A 609-amino-acid polypeptide reads, in one-letter code: Laccase-1 (609 aa).

The signal sequence occupies residues 1 to 20 (MYLSTVLFPLLALNLGLSHA). The Plastocyanin-like 1 domain maps to 45–141 (VFTNGEYPGP…DGQVGAMYIR (97 aa)). N-linked (GlcNAc...) asparagine glycosylation occurs at N75. Residues H79, H81, H123, and H125 each contribute to the Cu cation site. N-linked (GlcNAc...) asparagine glycosylation occurs at N257. The Plastocyanin-like 2 domain maps to 270-372 (TPSSVEPPVI…MSVYAILSYV (103 aa)). 3 N-linked (GlcNAc...) asparagine glycosylation sites follow: N403, N443, and N486. Residues 463–602 (STPLLFEPDP…MGGMALALLD (140 aa)) form the Plastocyanin-like 3 domain. H508, H511, and H513 together coordinate Cu cation. N531 and N546 each carry an N-linked (GlcNAc...) asparagine glycan. Positions 585, 586, 587, and 591 each coordinate Cu cation.

This sequence belongs to the multicopper oxidase family. It depends on Cu cation as a cofactor.

It is found in the secreted. It carries out the reaction 4 hydroquinone + O2 = 4 benzosemiquinone + 2 H2O. Its function is as follows. Required for the conversion of the yellow polyketide pigment synthesized by wA to the conidial green pigment. The polypeptide is Laccase-1 (yA) (Emericella nidulans (strain FGSC A4 / ATCC 38163 / CBS 112.46 / NRRL 194 / M139) (Aspergillus nidulans)).